A 179-amino-acid polypeptide reads, in one-letter code: NADH-quinone oxidoreductase subunit B (179 aa).

Cys35, Cys36, Cys100, and Cys129 together coordinate [4Fe-4S] cluster.

The protein belongs to the complex I 20 kDa subunit family. NDH-1 is composed of 14 different subunits. Subunits NuoB, C, D, E, F, and G constitute the peripheral sector of the complex. The cofactor is [4Fe-4S] cluster.

It is found in the cell inner membrane. The catalysed reaction is a quinone + NADH + 5 H(+)(in) = a quinol + NAD(+) + 4 H(+)(out). NDH-1 shuttles electrons from NADH, via FMN and iron-sulfur (Fe-S) centers, to quinones in the respiratory chain. Couples the redox reaction to proton translocation (for every two electrons transferred, four hydrogen ions are translocated across the cytoplasmic membrane), and thus conserves the redox energy in a proton gradient. This Aquifex aeolicus (strain VF5) protein is NADH-quinone oxidoreductase subunit B.